A 177-amino-acid polypeptide reads, in one-letter code: tRNA (cytidine(56)-2'-O)-methyltransferase (177 aa).

S-adenosyl-L-methionine is bound by residues leucine 84 and 109–113 (GAEKV).

It belongs to the aTrm56 family. In terms of assembly, homodimer.

Its subcellular location is the cytoplasm. It catalyses the reaction cytidine(56) in tRNA + S-adenosyl-L-methionine = 2'-O-methylcytidine(56) in tRNA + S-adenosyl-L-homocysteine + H(+). Functionally, specifically catalyzes the AdoMet-dependent 2'-O-ribose methylation of cytidine at position 56 in tRNAs. This is tRNA (cytidine(56)-2'-O)-methyltransferase from Methanosarcina mazei (strain ATCC BAA-159 / DSM 3647 / Goe1 / Go1 / JCM 11833 / OCM 88) (Methanosarcina frisia).